The primary structure comprises 360 residues: D-alanine--D-alanine ligase (360 aa).

Positions 139-344 (KDVFAQAGLA…YPELIEKLVS (206 aa)) constitute an ATP-grasp domain. 172–227 (EQVLGYPCFVKPANMGSSVGISKCRSKEELQTAFDLAFQYDRRVVVEEGVVGREIE) provides a ligand contact to ATP. Mg(2+) contacts are provided by Asp-298, Glu-311, and Asn-313.

The protein belongs to the D-alanine--D-alanine ligase family. It depends on Mg(2+) as a cofactor. Mn(2+) serves as cofactor.

Its subcellular location is the cytoplasm. The enzyme catalyses 2 D-alanine + ATP = D-alanyl-D-alanine + ADP + phosphate + H(+). It functions in the pathway cell wall biogenesis; peptidoglycan biosynthesis. Its function is as follows. Cell wall formation. The protein is D-alanine--D-alanine ligase of Bacillus pumilus (strain SAFR-032).